The primary structure comprises 221 residues: NAD(P)H-hydrate epimerase (221 aa).

Positions 10-211 constitute a YjeF N-terminal domain; it reads MQQYDQYTIN…DIGIYSPAEL (202 aa). 58 to 62 contacts (6S)-NADPHX; that stretch reads NNGGD. Positions 59 and 121 each coordinate K(+). Residues 125–131 and aspartate 154 contribute to the (6S)-NADPHX site; that span reads GIGLSKP. Serine 157 is a K(+) binding site.

It belongs to the NnrE/AIBP family. K(+) is required as a cofactor.

The enzyme catalyses (6R)-NADHX = (6S)-NADHX. The catalysed reaction is (6R)-NADPHX = (6S)-NADPHX. In terms of biological role, catalyzes the epimerization of the S- and R-forms of NAD(P)HX, a damaged form of NAD(P)H that is a result of enzymatic or heat-dependent hydration. This is a prerequisite for the S-specific NAD(P)H-hydrate dehydratase to allow the repair of both epimers of NAD(P)HX. This chain is NAD(P)H-hydrate epimerase, found in Weissella koreensis (strain KACC 15510).